Here is a 523-residue protein sequence, read N- to C-terminus: Magnesium/proton exchanger 1 (523 aa).

11 helical membrane passes run L24–G44, I88–I108, G125–M145, L157–I177, V185–A205, V325–P345, I349–G369, I377–T397, V428–V448, L461–L481, and M495–S515.

It belongs to the Ca(2+):cation antiporter (CaCA) (TC 2.A.19) family. MHX subfamily.

Its subcellular location is the vacuole membrane. In terms of biological role, vacuolar transporter that exchanges protons with Mg(2+), Zn(2+) and Fe(2+) ions. May control the partitioning of Mg(2+) and Zn(2+) between plant organs. The sequence is that of Magnesium/proton exchanger 1 (MHX1) from Oryza sativa subsp. japonica (Rice).